Here is a 537-residue protein sequence, read N- to C-terminus: Lariat debranching enzyme (537 aa).

The a divalent metal cation site is built by C8, H10, D39, and N84. Residues 124 to 154 form a lariat recognition loop region; sequence SGIYKGHDFLRGHHEFPPYTESTCRSVYHVR. A divalent metal cation is bound by residues H174, H226, and H228. Disordered regions lie at residues 242 to 272 and 473 to 537; these read KAPT…SRLP and TAAE…EDDD. A compositionally biased stretch (low complexity) spans 251-260; sequence SSSSSSSSSS.

It belongs to the lariat debranching enzyme family. Fe(2+) is required as a cofactor. Requires Zn(2+) as cofactor. The cofactor is Mn(2+).

The protein resides in the nucleus. Its activity is regulated as follows. Active in presence of diverse metals including Fe(2+), Zn(2+), Mn(2+). Binds two metal cations in two adjacent alpha and beta metal-binding pockets. Functionally, cleaves the 2'-5' phosphodiester linkage at the branch point of lariat intron pre-mRNAs after splicing and converts them into linear molecules that are subsequently degraded. It thereby facilitates ribonucleotide turnover. This Drosophila pseudoobscura pseudoobscura (Fruit fly) protein is Lariat debranching enzyme (DBR1).